Consider the following 63-residue polypeptide: ATPase inhibitor, mitochondrial (63 aa).

The disordered stretch occupies residues 1 to 23 (TAGATGATRQDGSTDAFEKREKA). Residues 18 to 62 (EKREKAQEDLYIRQHEKEQLEALKESLKKQKKSLDDLEBKIDDLT) are a coiled coil.

It belongs to the ATPase inhibitor family.

Its subcellular location is the mitochondrion. In terms of biological role, this protein forms a one-to-one complex with ATPase to inhibit the enzyme activity completely. The chain is ATPase inhibitor, mitochondrial from Cyberlindnera jadinii (Torula yeast).